The primary structure comprises 88 residues: MERINTRKALVGSVVSSVNDKTIIVAVDIYKKHPIYSKRFKKTKRFAAHDEQNKAKIGDIVKIIETRPISKTKKFRLDKIIELAKEGN.

Belongs to the universal ribosomal protein uS17 family. In terms of assembly, part of the 30S ribosomal subunit.

Its function is as follows. One of the primary rRNA binding proteins, it binds specifically to the 5'-end of 16S ribosomal RNA. The chain is Small ribosomal subunit protein uS17 from Mycoplasmopsis pulmonis (strain UAB CTIP) (Mycoplasma pulmonis).